A 124-amino-acid polypeptide reads, in one-letter code: Small ribosomal subunit protein uS12 (124 aa).

D90 is subject to 3-methylthioaspartic acid.

This sequence belongs to the universal ribosomal protein uS12 family. As to quaternary structure, part of the 30S ribosomal subunit. Contacts proteins S8 and S17. May interact with IF1 in the 30S initiation complex.

Functionally, with S4 and S5 plays an important role in translational accuracy. Its function is as follows. Interacts with and stabilizes bases of the 16S rRNA that are involved in tRNA selection in the A site and with the mRNA backbone. Located at the interface of the 30S and 50S subunits, it traverses the body of the 30S subunit contacting proteins on the other side and probably holding the rRNA structure together. The combined cluster of proteins S8, S12 and S17 appears to hold together the shoulder and platform of the 30S subunit. The protein is Small ribosomal subunit protein uS12 of Wolbachia pipientis wMel.